Here is a 337-residue protein sequence, read N- to C-terminus: DNA-directed RNA polymerase subunit alpha (337 aa).

The tract at residues 1 to 233 (MIQKNWQELI…DQLSVFVNFK (233 aa)) is alpha N-terminal domain (alpha-NTD). Positions 249-337 (FNPALLKKVD…DLAKHYEDQY (89 aa)) are alpha C-terminal domain (alpha-CTD).

Belongs to the RNA polymerase alpha chain family. Homodimer. The RNAP catalytic core consists of 2 alpha, 1 beta, 1 beta' and 1 omega subunit. When a sigma factor is associated with the core the holoenzyme is formed, which can initiate transcription.

The enzyme catalyses RNA(n) + a ribonucleoside 5'-triphosphate = RNA(n+1) + diphosphate. DNA-dependent RNA polymerase catalyzes the transcription of DNA into RNA using the four ribonucleoside triphosphates as substrates. This is DNA-directed RNA polymerase subunit alpha from Bartonella bacilliformis (strain ATCC 35685 / KC583 / Herrer 020/F12,63).